Reading from the N-terminus, the 424-residue chain is Phosphoprotein associated with glycosphingolipid-enriched microdomains 1 (424 aa).

Topologically, residues 1–17 (MGPAGSALSSGQMQMQM) are extracellular. A helical; Signal-anchor for type III membrane protein transmembrane segment spans residues 18–38 (VLWGSLAAVAMFFLITFLILL). S-palmitoyl cysteine attachment occurs at residues Cys39 and Cys42. Residues 39–424 (CSSCDRDKKP…LQQGRDVTRL (386 aa)) lie on the Cytoplasmic side of the membrane. 2 positions are modified to phosphoserine: Ser52 and Ser63. Phosphotyrosine; by LYN is present on Tyr107. Ser157 is modified (phosphoserine). Phosphotyrosine is present on residues Tyr165, Tyr183, and Tyr224. Residues 194-347 (DKSQGGKSKS…GPPQRSSSSC (154 aa)) are disordered. The span at 215 to 230 (AEGKADFAEYASVDRN) shows a compositional bias: basic and acidic residues. Ser226 bears the Phosphoserine mark. The span at 236-247 (STNAESILGTSS) shows a compositional bias: polar residues. Tyr314 bears the Phosphotyrosine; by FYN and LYN mark. Residues 314 to 317 (YSSV) are interaction with CSK. A compositionally biased stretch (polar residues) spans 331 to 347 (STCQCPQGPPQRSSSSC). Phosphoserine is present on Ser346. Phosphotyrosine occurs at positions 351, 381, and 409. Positions 361–424 (PNSISMLPPA…LQQGRDVTRL (64 aa)) are disordered. The interval 422–424 (TRL) is interaction with NHERF1.

In terms of assembly, interacts with NHERF1/EBP50. In resting T-cells, part of a PAG1-NHERF1-MSN complex which is disrupted upon TCR activation. When phosphorylated, interacts with CSK. Identified in a complex with LYN and STAT3. Interacts with LYN. Post-translationally, palmitoylated. In terms of processing, phosphorylated by FYN on Tyr-314 in resting T-cells; which promotes interaction with CSK. Dephosphorylated by PTPRC/CD45 upon TCR activation; which leads to CSK dissociation. May also be dephosphorylated by PTPN11. Hyperphosphorylated in mast cells upon FCER1 activation. Phosphorylated by LYN in response to EPO. In terms of tissue distribution, ubiquitously expressed, with highest levels in developing brain, lung, thymus, spleen and testis. Present in mast cells.

It is found in the cell membrane. Negatively regulates TCR (T-cell antigen receptor)-mediated signaling in T-cells and FCER1 (high affinity immunoglobulin epsilon receptor)-mediated signaling in mast cells. Promotes CSK activation and recruitment to lipid rafts, which results in LCK inhibition. Inhibits immunological synapse formation by preventing dynamic arrangement of lipid raft proteins. May be involved in cell adhesion signaling. The protein is Phosphoprotein associated with glycosphingolipid-enriched microdomains 1 (Pag1) of Rattus norvegicus (Rat).